Reading from the N-terminus, the 103-residue chain is Co-chaperonin GroES (103 aa).

The protein belongs to the GroES chaperonin family. Heptamer of 7 subunits arranged in a ring. Interacts with the chaperonin GroEL.

It is found in the cytoplasm. Its function is as follows. Together with the chaperonin GroEL, plays an essential role in assisting protein folding. The GroEL-GroES system forms a nano-cage that allows encapsulation of the non-native substrate proteins and provides a physical environment optimized to promote and accelerate protein folding. GroES binds to the apical surface of the GroEL ring, thereby capping the opening of the GroEL channel. This is Co-chaperonin GroES from Nostoc punctiforme (strain ATCC 29133 / PCC 73102).